Here is a 109-residue protein sequence, read N- to C-terminus: Large ribosomal subunit protein uL22 (109 aa).

Belongs to the universal ribosomal protein uL22 family. Part of the 50S ribosomal subunit.

In terms of biological role, this protein binds specifically to 23S rRNA; its binding is stimulated by other ribosomal proteins, e.g. L4, L17, and L20. It is important during the early stages of 50S assembly. It makes multiple contacts with different domains of the 23S rRNA in the assembled 50S subunit and ribosome. Its function is as follows. The globular domain of the protein is located near the polypeptide exit tunnel on the outside of the subunit, while an extended beta-hairpin is found that lines the wall of the exit tunnel in the center of the 70S ribosome. The polypeptide is Large ribosomal subunit protein uL22 (Bordetella avium (strain 197N)).